The chain runs to 825 residues: Ent-copalyl diphosphate synthase 2, chloroplastic (825 aa).

The transit peptide at 1-70 directs the protein to the chloroplast; it reads MVLSSSCTTV…KGSSLTPIVR (70 aa). A substrate-binding site is contributed by K241. A DXDD motif motif is present at residues 373–376; the sequence is EVDD. Residue K459 participates in substrate binding.

This sequence belongs to the terpene synthase family. Tpsc subfamily. Requires Mg(2+) as cofactor. As to expression, expressed in tassels.

Its subcellular location is the plastid. It localises to the chloroplast. It carries out the reaction (2E,6E,10E)-geranylgeranyl diphosphate = ent-copalyl diphosphate. Its pathway is plant hormone biosynthesis; gibberellin biosynthesis. In terms of biological role, involved in gibberellin biosynthesis. Catalyzes the conversion of geranylgeranyl diphosphate to the gibberellin precursor ent-copalyl diphosphate (ent-CPP). Involved in the production of antifungal dolabralexin phytoalexins in response to biotic and abiotic stresses. In response to fungal infection and in associtation with KSL4, is involved in the production dolabradiene, a type of antifungal phytoalexin. This chain is Ent-copalyl diphosphate synthase 2, chloroplastic, found in Zea mays (Maize).